The primary structure comprises 81 residues: Cytotoxin 4 (81 aa).

The signal sequence occupies residues 1 to 21 (MKTLLLTLVVVTIVCLDLGYT). 4 disulfides stabilise this stretch: C24-C42, C35-C59, C63-C74, and C75-C80.

This sequence belongs to the three-finger toxin family. Short-chain subfamily. Type IA cytotoxin sub-subfamily. Monomer in solution; Homodimer and oligomer in the presence of negatively charged lipids forming a pore with a size ranging between 20 and 30 Angstroms. In terms of tissue distribution, expressed by the venom gland.

It localises to the secreted. The protein localises to the target cell membrane. In terms of biological role, basic protein that bind to cell membrane and depolarizes cardiomyocytes. This cytotoxin also shows lytic activities, but 2-fold more important than that of CTX-A2. It binds to the integrin alpha-V/beta-3 with a moderate affinity. Inhibits protein kinase C. It may interact with sulfatides in the cell membrane, which induces pore formation and cell internalization and is responsible for cytotoxicity in cardiomyocytes. It may also target the mitochondrial membrane and induces mitochondrial swelling and fragmentation. This chain is Cytotoxin 4, found in Naja atra (Chinese cobra).